A 194-amino-acid chain; its full sequence is Nerve growth factor (194 aa).

The first 18 residues, 1–18 (MRWSMLVLLLLSCSQTFA), serve as a signal peptide directing secretion. Positions 19 to 76 (QRPGDICPQNPHHGQDVTANTVPTVDPKLFNKRRYRSPRVLFSEHPPDSEPSRSRTKR) are excised as a propeptide. Positions 54–84 (RSPRVLFSEHPPDSEPSRSRTKRKAGPPQHR) are disordered. Cystine bridges form between cysteine 90–cysteine 155, cysteine 133–cysteine 183, and cysteine 143–cysteine 185. Asparagine 99 and asparagine 120 each carry an N-linked (GlcNAc...) asparagine glycan.

Belongs to the NGF-beta family. Homodimer.

The protein resides in the secreted. Nerve growth factor is important for the development and maintenance of the sympathetic and sensory nervous systems. It stimulates division and differentiation of sympathetic and embryonic sensory neurons. The protein is Nerve growth factor (ngf) of Danio rerio (Zebrafish).